The sequence spans 311 residues: Olfactory receptor 287 (311 aa).

At 1 to 27 (MAWSTGQNLSTPGPFILLGFPGPRSMR) the chain is on the extracellular side. Asn8 carries an N-linked (GlcNAc...) asparagine glycan. A helical transmembrane segment spans residues 28–53 (IGLFLLFLVMYLLTVVGNLAIISLVG). The Cytoplasmic segment spans residues 54-60 (AHRCLQT). The helical transmembrane segment at 61–82 (PMYFFLCNLSFLEIWFTTACVP) threads the bilayer. Topologically, residues 83–103 (KTLATFAPRGGVISLAGCATQ) are extracellular. An intrachain disulfide couples Cys100 to Cys192. A helical membrane pass occupies residues 104–123 (MYFVFSLGCTEYFLLAVMAY). Residues 124–142 (DRYLAICLPLRYGGIMTPG) are Cytoplasmic-facing. A helical membrane pass occupies residues 143-161 (LAMRLALGSWLCGFSAITV). The Extracellular portion of the chain corresponds to 162–199 (PATLIARLSFCGSRVINHFFCDISPWIVLSCTDTQVVE). Residues 200-222 (LVSFGIAFCVILGSCGITLVSYA) form a helical membrane-spanning segment. Residues 223-239 (YIITTIIKIPSARGRHR) are Cytoplasmic-facing. A helical membrane pass occupies residues 240-263 (AFSTCSSHLTVVLIWYGSTIFLHV). Topologically, residues 264–275 (RTSVESSLDLTK) are extracellular. The chain crosses the membrane as a helical span at residues 276–295 (AITVLNTIVTPVLNPFIYTL). Over 296–311 (RNKDVKEALRRTVKGK) the chain is Cytoplasmic.

This sequence belongs to the G-protein coupled receptor 1 family. As to expression, olfactory epithelium.

The protein resides in the cell membrane. Functionally, odorant receptor. The protein is Olfactory receptor 287 (Olr287) of Rattus norvegicus (Rat).